The chain runs to 350 residues: Phenylalanine--tRNA ligase alpha subunit (350 aa).

Glu260 contacts Mg(2+).

It belongs to the class-II aminoacyl-tRNA synthetase family. Phe-tRNA synthetase alpha subunit type 1 subfamily. As to quaternary structure, tetramer of two alpha and two beta subunits. Mg(2+) is required as a cofactor.

It is found in the cytoplasm. It carries out the reaction tRNA(Phe) + L-phenylalanine + ATP = L-phenylalanyl-tRNA(Phe) + AMP + diphosphate + H(+). This chain is Phenylalanine--tRNA ligase alpha subunit, found in Mesoplasma florum (strain ATCC 33453 / NBRC 100688 / NCTC 11704 / L1) (Acholeplasma florum).